The primary structure comprises 256 residues: Pimeloyl-[acyl-carrier protein] methyl ester esterase (256 aa).

An AB hydrolase-1 domain is found at 15–242 (HLVLLHGWGL…AAHAPFISHP (228 aa)). Residues tryptophan 22, 82-83 (SL), and 143-147 (FLALQ) contribute to the substrate site. Serine 82 (nucleophile) is an active-site residue. Active-site residues include aspartate 207 and histidine 235. Residue histidine 235 coordinates substrate.

It belongs to the AB hydrolase superfamily. Carboxylesterase BioH family. In terms of assembly, monomer.

Its subcellular location is the cytoplasm. It catalyses the reaction 6-carboxyhexanoyl-[ACP] methyl ester + H2O = 6-carboxyhexanoyl-[ACP] + methanol + H(+). It participates in cofactor biosynthesis; biotin biosynthesis. The physiological role of BioH is to remove the methyl group introduced by BioC when the pimeloyl moiety is complete. It allows to synthesize pimeloyl-ACP via the fatty acid synthetic pathway through the hydrolysis of the ester bonds of pimeloyl-ACP esters. This chain is Pimeloyl-[acyl-carrier protein] methyl ester esterase, found in Escherichia coli O6:K15:H31 (strain 536 / UPEC).